Reading from the N-terminus, the 234-residue chain is Aspartate/glutamate leucyltransferase (234 aa).

This sequence belongs to the R-transferase family. Bpt subfamily.

The protein resides in the cytoplasm. The catalysed reaction is N-terminal L-glutamyl-[protein] + L-leucyl-tRNA(Leu) = N-terminal L-leucyl-L-glutamyl-[protein] + tRNA(Leu) + H(+). The enzyme catalyses N-terminal L-aspartyl-[protein] + L-leucyl-tRNA(Leu) = N-terminal L-leucyl-L-aspartyl-[protein] + tRNA(Leu) + H(+). In terms of biological role, functions in the N-end rule pathway of protein degradation where it conjugates Leu from its aminoacyl-tRNA to the N-termini of proteins containing an N-terminal aspartate or glutamate. In Hahella chejuensis (strain KCTC 2396), this protein is Aspartate/glutamate leucyltransferase.